Consider the following 413-residue polypeptide: NADPH dehydrogenase afvA (413 aa).

A53–C56 is an FMN binding site. Y58 contacts substrate. Positions 88 and 130 each coordinate FMN. Substrate is bound at residue H211–H214. FMN is bound by residues R264 and G370 to R371.

This sequence belongs to the NADH:flavin oxidoreductase/NADH oxidase family. NamA subfamily. FMN serves as cofactor.

The catalysed reaction is A + NADPH + H(+) = AH2 + NADP(+). Its pathway is secondary metabolite biosynthesis. In terms of biological role, NADPH dehydrogenase; part of the gene cluster that mediates the biosynthesis of aflavarin, a bicoumarin that exhibits anti-insectan activity against the fungivorous beetle C.hemipterus. The protein is NADPH dehydrogenase afvA of Aspergillus flavus (strain ATCC 200026 / FGSC A1120 / IAM 13836 / NRRL 3357 / JCM 12722 / SRRC 167).